Here is a 247-residue protein sequence, read N- to C-terminus: Large ribosomal subunit protein uL24m (247 aa).

One can recognise a KOW domain in the interval 84–117 (FFRGDRIEVLVGKDKGKQGIVTQVIPERNWVIVE).

This sequence belongs to the universal ribosomal protein uL24 family. In terms of assembly, component of the mitochondrial ribosome large subunit (39S) which comprises a 16S rRNA and about 50 distinct proteins.

It localises to the mitochondrion. The protein is Large ribosomal subunit protein uL24m (mRpL24) of Drosophila melanogaster (Fruit fly).